The primary structure comprises 317 residues: Ornithine carbamoyltransferase (317 aa).

Residues 54–57 (STRT), Gln81, Arg105, and 132–135 (HPCQ) contribute to the carbamoyl phosphate site. L-ornithine contacts are provided by residues Asn163, Asp227, and 231–232 (SM). Carbamoyl phosphate-binding positions include 267–268 (CL) and Arg295.

It belongs to the aspartate/ornithine carbamoyltransferase superfamily. OTCase family.

The protein resides in the cytoplasm. It catalyses the reaction carbamoyl phosphate + L-ornithine = L-citrulline + phosphate + H(+). It functions in the pathway amino-acid biosynthesis; L-arginine biosynthesis; L-arginine from L-ornithine and carbamoyl phosphate: step 1/3. Its function is as follows. Reversibly catalyzes the transfer of the carbamoyl group from carbamoyl phosphate (CP) to the N(epsilon) atom of ornithine (ORN) to produce L-citrulline. This Parafrankia sp. (strain EAN1pec) protein is Ornithine carbamoyltransferase.